We begin with the raw amino-acid sequence, 351 residues long: Cysteine-rich receptor-like protein kinase 45 (351 aa).

Residues N37–L287 enclose the Protein kinase domain. ATP is bound by residues V43 to V51 and K65. Y110 carries the phosphotyrosine modification. D162 serves as the catalytic Proton acceptor. 2 positions are modified to phosphothreonine: T197 and T202. A Phosphotyrosine modification is found at Y210.

This sequence belongs to the protein kinase superfamily. Ser/Thr protein kinase family. CRK subfamily. In terms of assembly, interacts with CRK36. Autophosphorylated and phosphorylated by CRK36.

The protein localises to the cytoplasm. The protein resides in the cytosol. It carries out the reaction L-seryl-[protein] + ATP = O-phospho-L-seryl-[protein] + ADP + H(+). The enzyme catalyses L-threonyl-[protein] + ATP = O-phospho-L-threonyl-[protein] + ADP + H(+). Forms a complex with CRK36 that may negatively control abscisic acid (ABA) and osmotic stress signal transduction. Involved in plant response to ABA during seed germination, early seedling growth and responses to abiotic stresses by inducing the expression of ABA-responsive genes and stress-inducible genes. Acts as a positive regulator in disease resistance, downstream of NPR1 and WRKY70. This chain is Cysteine-rich receptor-like protein kinase 45, found in Arabidopsis thaliana (Mouse-ear cress).